The sequence spans 135 residues: C-type lectin LmsL (135 aa).

4 disulfide bridges follow: cysteine 3–cysteine 14, cysteine 31–cysteine 131, cysteine 38–cysteine 133, and cysteine 106–cysteine 123. The 123-residue stretch at 10 to 132 (MNGLCYKIFD…CESKNAFLCQ (123 aa)) folds into the C-type lectin domain. Ca(2+)-binding residues include glutamine 96, aspartate 98, glutamate 104, asparagine 119, and aspartate 120. The short motif at 96-98 (QPD) is the Galactose-binding element.

The protein belongs to the true venom lectin family. In terms of assembly, homodimer; disulfide-linked. Expressed by the venom gland.

Its subcellular location is the secreted. In terms of biological role, galactose-binding protein which recognizes specific carbohydrate structures and agglutinates a variety of animal cells by binding to cell-surface glycoproteins and glycolipids. Is a calcium-dependent lectin. Shows high hemagglutinating activity, that is inhibited by lactose, galactose and inositol. The protein is C-type lectin LmsL of Lachesis stenophrys (Central American bushmaster).